The primary structure comprises 369 residues: Probable dual-specificity RNA methyltransferase RlmN (369 aa).

Glu-108 (proton acceptor) is an active-site residue. The Radical SAM core domain maps to 114–351; the sequence is YPDRATLCIS…LAQGVSCTVR (238 aa). The cysteines at positions 121 and 362 are disulfide-linked. [4Fe-4S] cluster is bound by residues Cys-128, Cys-132, and Cys-135. Residues 183-184, Ser-217, 240-242, and Asn-319 each bind S-adenosyl-L-methionine; these read GE and SLH. Cys-362 serves as the catalytic S-methylcysteine intermediate.

The protein belongs to the radical SAM superfamily. RlmN family. [4Fe-4S] cluster serves as cofactor.

The protein localises to the cytoplasm. It catalyses the reaction adenosine(2503) in 23S rRNA + 2 reduced [2Fe-2S]-[ferredoxin] + 2 S-adenosyl-L-methionine = 2-methyladenosine(2503) in 23S rRNA + 5'-deoxyadenosine + L-methionine + 2 oxidized [2Fe-2S]-[ferredoxin] + S-adenosyl-L-homocysteine. It carries out the reaction adenosine(37) in tRNA + 2 reduced [2Fe-2S]-[ferredoxin] + 2 S-adenosyl-L-methionine = 2-methyladenosine(37) in tRNA + 5'-deoxyadenosine + L-methionine + 2 oxidized [2Fe-2S]-[ferredoxin] + S-adenosyl-L-homocysteine. Its function is as follows. Specifically methylates position 2 of adenine 2503 in 23S rRNA and position 2 of adenine 37 in tRNAs. The polypeptide is Probable dual-specificity RNA methyltransferase RlmN (Rhodococcus jostii (strain RHA1)).